A 311-amino-acid chain; its full sequence is Malate dehydrogenase (311 aa).

NAD(+)-binding positions include 7 to 13 and Asp34; that span reads GAAGGIG. Substrate contacts are provided by Arg81 and Arg87. NAD(+) contacts are provided by residues Asn94 and 117-119; that span reads ITN. Residues Asn119 and Arg153 each contribute to the substrate site. Residue His177 is the Proton acceptor of the active site. Met227 is a binding site for NAD(+).

The protein belongs to the LDH/MDH superfamily. MDH type 1 family. Homodimer.

It carries out the reaction (S)-malate + NAD(+) = oxaloacetate + NADH + H(+). Its function is as follows. Catalyzes the reversible oxidation of malate to oxaloacetate. The chain is Malate dehydrogenase from Shewanella loihica (strain ATCC BAA-1088 / PV-4).